The sequence spans 519 residues: Sterile alpha motif domain-containing protein 1 (519 aa).

Pro residues predominate over residues 1 to 11 (MAGPPALPPPE). Disordered stretches follow at residues 1 to 30 (MAGPPALPPPETAAAATTAAAASSSAASPH) and 87 to 232 (YKGS…PVSL). The span at 12 to 29 (TAAAATTAAAASSSAASP) shows a compositional bias: low complexity. Residues 23 to 99 (SSSAASPHYQ…SISYRNAARV (77 aa)) form the SAMD1-like winged helix (WH) domain. A Phosphothreonine modification is found at threonine 107. The span at 108 to 133 (PPAPPRVPRGGPAAPPPTPAPPPAPV) shows a compositional bias: pro residues. A compositionally biased stretch (low complexity) spans 134–147 (AAPTRAPRAAAATA). Serine 150 carries the post-translational modification Phosphoserine. Residues 157 to 166 (GPRAQRAAPL) are compositionally biased toward low complexity. Pro residues predominate over residues 167-217 (AAPPPAPAAPPAAAPPAGPRRAPPPAVAAREPPAPPQQQQPPPPQPQPPPE). Positions 218–230 (GGAARAGGPARPV) are enriched in low complexity. Position 242 is a phosphoserine (serine 242). The segment covering 261-271 (EAARGRLERTR) has biased composition (basic and acidic residues). Disordered regions lie at residues 261–381 (EAAR…PGSC) and 417–439 (PALPGADGTPFGCPPGRKEKPTD). A compositionally biased stretch (acidic residues) spans 308–325 (KEEEDEDEDEEEEEEDNV). In terms of domain architecture, SAM spans 443–511 (WTVMDVVEYF…KVLQQGHFED (69 aa)).

As to quaternary structure, homopolymerize into a closed pentameric ring. Interacts (via SAM domain) with L3MBTL3 (via SAM domain); the interaction mediates L3MBTL3 binding to chromatin. Interacts (via WH domain) with KDM1A; the interaction modulates KDM1A function. Expressed to similar levels in different organs. Expressed at higher levels in bone marrow, osteoclasts and spleen. Expressed in vascular smooth muscle cells.

It localises to the nucleus. The protein localises to the chromosome. It is found in the secreted. In terms of biological role, unmethylated CpG islands (CGIs)-binding protein which localizes to H3K4me3-decorated CGIs, where it acts as a transcriptional repressor. Tethers L3MBTL3 to chromatin and interacts with the KDM1A histone demethylase complex to modulate H3K4me2 and H3K4me3 levels at CGIs. Plays a role in atherogenesis by binding with LDL on cell surface and promoting LDL oxidation which leads to the formation of foam cell. The sequence is that of Sterile alpha motif domain-containing protein 1 from Mus musculus (Mouse).